Here is a 242-residue protein sequence, read N- to C-terminus: uncharacterized protein (242 aa).

It is found in the cytoplasm. Its subcellular location is the nucleus. This is an uncharacterized protein from Schizosaccharomyces pombe (strain 972 / ATCC 24843) (Fission yeast).